Consider the following 330-residue polypeptide: tRNA U34 carboxymethyltransferase (330 aa).

Residues K98, W112, K117, G137, 187–188, M203, Y207, and R322 each bind carboxy-S-adenosyl-L-methionine; that span reads ME. The interval 309–330 is disordered; the sequence is NPSKTIEGYPGPKRATLIAEKP.

It belongs to the class I-like SAM-binding methyltransferase superfamily. CmoB family. Homotetramer.

The enzyme catalyses carboxy-S-adenosyl-L-methionine + 5-hydroxyuridine(34) in tRNA = 5-carboxymethoxyuridine(34) in tRNA + S-adenosyl-L-homocysteine + H(+). Functionally, catalyzes carboxymethyl transfer from carboxy-S-adenosyl-L-methionine (Cx-SAM) to 5-hydroxyuridine (ho5U) to form 5-carboxymethoxyuridine (cmo5U) at position 34 in tRNAs. The protein is tRNA U34 carboxymethyltransferase of Marinobacter nauticus (strain ATCC 700491 / DSM 11845 / VT8) (Marinobacter aquaeolei).